Reading from the N-terminus, the 306-residue chain is Mitochondrial brown fat uncoupling protein 1 (306 aa).

Residues Met-1–Ala-10 lie on the Mitochondrial intermembrane side of the membrane. A helical membrane pass occupies residues Pro-11–Phe-32. Solcar repeat units lie at residues Pro-11–Phe-102, Pro-110–Ala-200, and Asp-209–Glu-294. Residues Pro-33–Lys-73 lie on the Mitochondrial matrix side of the membrane. A fatty acid 16:0-binding site is contributed by Lys-56. The helical transmembrane segment at Leu-74 to Tyr-96 threads the bilayer. Residues Asp-97–Lys-115 are Mitochondrial intermembrane-facing. A helical transmembrane segment spans residues Ile-116 to Pro-132. Over Thr-133–Thr-177 the chain is Mitochondrial matrix. The helical transmembrane segment at Pro-178–Tyr-194 threads the bilayer. The Mitochondrial intermembrane segment spans residues Asp-195–Val-211. A helical transmembrane segment spans residues Pro-212–Pro-231. At Val-232–Ala-265 the chain is on the mitochondrial matrix side. Cys-253 is modified (cysteine sulfenic acid (-SOH)). A helical membrane pass occupies residues Phe-266–Phe-288. Residue Lys-268 coordinates fatty acid 16:0. The Mitochondrial intermembrane portion of the chain corresponds to Glu-289 to Thr-306.

This sequence belongs to the mitochondrial carrier (TC 2.A.29) family. As to quaternary structure, most probably functions as a monomer. Binds one purine nucleotide per monomer. However, has also been suggested to function as a homodimer or a homotetramer. Tightly associates with cardiolipin in the mitochondrion inner membrane; may stabilize and regulate its activity. May undergo sulfenylation upon cold exposure. May increase the sensitivity of UCP1 thermogenic function to the activation by noradrenaline probably through structural effects. In terms of processing, may undergo ubiquitin-mediated proteasomal degradation.

The protein resides in the mitochondrion inner membrane. The enzyme catalyses H(+)(in) = H(+)(out). Its activity is regulated as follows. Has no constitutive proton transporter activity and has to be activated by long-chain fatty acids/LCFAs. Inhibited by purine nucleotides. Both purine nucleotides and LCFAs bind the cytosolic side of the transporter and directly compete to activate or inhibit it. Activated by noradrenaline and reactive oxygen species. Despite lacking canonical translational encoding for selenocysteine, a small pool of the protein has been observed to selectively incorporate selenocysteine at 'Cys-253'. Selenocysteine-modified protein is highly sensitive to redox modification and may constitute a pool of protein highly sensitive to activation by elevated levels of reactive oxygen species (ROS). In terms of biological role, mitochondrial protein responsible for thermogenic respiration, a specialized capacity of brown adipose tissue and beige fat that participates in non-shivering adaptive thermogenesis to temperature and diet variations and more generally to the regulation of energy balance. Functions as a long-chain fatty acid/LCFA and proton symporter, simultaneously transporting one LCFA and one proton through the inner mitochondrial membrane. However, LCFAs remaining associated with the transporter via their hydrophobic tails, it results in an apparent transport of protons activated by LCFAs. Thereby, dissipates the mitochondrial proton gradient and converts the energy of substrate oxydation into heat instead of ATP. Regulates the production of reactive oxygen species/ROS by mitochondria. The sequence is that of Mitochondrial brown fat uncoupling protein 1 from Ochotona dauurica (Daurian pika).